The chain runs to 126 residues: Large ribosomal subunit protein bL12 (126 aa).

It belongs to the bacterial ribosomal protein bL12 family. In terms of assembly, homodimer. Part of the ribosomal stalk of the 50S ribosomal subunit. Forms a multimeric L10(L12)X complex, where L10 forms an elongated spine to which 2 to 4 L12 dimers bind in a sequential fashion. Binds GTP-bound translation factors.

Functionally, forms part of the ribosomal stalk which helps the ribosome interact with GTP-bound translation factors. Is thus essential for accurate translation. The polypeptide is Large ribosomal subunit protein bL12 (Acidovorax sp. (strain JS42)).